The chain runs to 1254 residues: Structural polyprotein (1254 aa).

Positions 1 to 33 are necessary for nucleocapsid assembly and virus assembly; the sequence is MFPYQPMYPMQPMPFRNPFAAPRRPWFPRTDPF. The interval 33–68 is host transcription inhibition; that stretch reads FLAMQVQELARSMANLTFKQRRDVPPEGPPAKKKKK. A Supraphysiological nuclear export signal motif is present at residues 41-48; that stretch reads LARSMANL. A disordered region spans residues 48 to 119; sequence LTFKQRRDVP…KPGKRQRMVM (72 aa). Positions 64-68 match the Nuclear localization signal motif; the sequence is KKKKK. Composition is skewed to basic residues over residues 79–93 and 102–117; these read NGKK…KKKT and GGKK…RQRM. The segment at 91 to 126 is binding to the viral RNA; sequence KKTGPPPQKTNGGKKKVNKKPGKRQRMVMKLESDKT. A Phosphothreonine modification is found at Thr93. Positions 111-125 are ribosome-binding; that stretch reads PGKRQRMVMKLESDK. The residue at position 123 (Ser123) is a Phosphoserine. The 150-residue stretch at 125–274 folds into the Peptidase S3 domain; sequence KTFPIMLDGR…KYTPENSEQW (150 aa). Position 126 is a phosphothreonine (Thr126). Catalysis depends on His151, which acts as the Charge relay system. An interaction with spike glycoprotein E2 region spans residues 167–172; sequence KKASKY. Residues Asp173 and Ser225 each act as charge relay system in the active site. Residues 259-263 form an interaction with spike glycoprotein E2 region; that stretch reads EKGVT. The functions as an uncleaved signal peptide for the precursor of protein E3/E2 stretch occupies residues 275-286; that stretch reads SLVTTMCLLANV. The Extracellular segment spans residues 275-700; the sequence is SLVTTMCLLA…HYYHRYPMST (426 aa). 7 disulfide bridges follow: Cys281-Cys290, Cys352-Cys456, Cys355-Cys360, Cys423-Cys437, Cys484-Cys599, Cys533-Cys559, and Cys535-Cys553. N-linked (GlcNAc...) asparagine; by host glycosylation occurs at Asn285. Asn651 is a glycosylation site (N-linked (GlcNAc...) asparagine; by host). Residues 701–721 traverse the membrane as a helical segment; it reads ILGLSICAAIVTTSIAASVWL. Residues 722–756 are Cytoplasmic-facing; it reads FCKSRISCLTPYRLTPNARMPLCLAVLCCARTARA. Positions 724–728 are interaction with the capsid protein; the sequence is KSRIS. S-palmitoyl cysteine; by host attachment occurs at residues Cys729, Cys749, and Cys750. The transient transmembrane before p62-6K protein processing stretch occupies residues 729-749; that stretch reads CLTPYRLTPNARMPLCLAVLC. Cys729 and Cys750 are oxidised to a cystine. The Extracellular segment spans residues 757–771; the sequence is ETTWESLDHLWNHNQ. 2 consecutive transmembrane segments (helical) span residues 772–790 and 791–811; these read QMFW…VATR and LLKC…VGAG. The Extracellular segment spans residues 812–1224; it reads AYEHATTMPN…SKTAWTWLTS (413 aa). 4 cysteine pairs are disulfide-bonded: Cys861-Cys926, Cys874-Cys906, Cys875-Cys908, and Cys880-Cys890. Positions 896 to 913 are E1 fusion peptide loop; that stretch reads VYPFMWGGAYCFCDTENT. Asn946 and Asn1082 each carry an N-linked (GlcNAc...) asparagine; by host glycan. Disulfide bonds link Cys1071-Cys1083, Cys1113-Cys1188, Cys1118-Cys1192, and Cys1140-Cys1182. A helical membrane pass occupies residues 1225–1245; that stretch reads LLGGSAIIIIIGLVLATIVAM. The Cytoplasmic segment spans residues 1246–1254; sequence YVLTNQKHN.

Homodimer. Homomultimer. Interacts with host karyopherin KPNA4; this interaction allows the nuclear import of the viral capsid protein. Interacts with spike glycoprotein E2. Interacts with host IRAK1; the interaction leads to inhibition of IRAK1-dependent signaling. Part of a tetrameric complex composed of host CRM1, host importin alpha/beta dimer and the viral capsid; this complex blocks the receptor-mediated transport through the nuclear pore. Interacts with host phosphatase PPP1CA; this interaction dephosphorylates the capsid protein, which increases its ability to bind to the viral genome. In terms of assembly, the precursor of protein E3/E2 and E1 form a heterodimer shortly after synthesis. As to quaternary structure, interacts with spike glycoprotein E2. The precursor of protein E3/E2 and E1 form a heterodimer shortly after synthesis. Processing of the precursor of protein E3/E2 into E2 and E3 results in a heterodimer of the spike glycoproteins E2 and E1. Spike at virion surface are constituted of three E2-E1 heterodimers. After target cell attachment and endocytosis, E1 change conformation to form homotrimers. Interacts with 6K protein. Interacts with host LDLRAD3; this interaction mediates viral entry to the host cell. Interacts with spike glycoprotein E1. Processing of the precursor of protein E3/E2 into E2 and E3 results in a heterodimer of the spike glycoproteins E2 and E1. Spike at virion surface are constituted of a trimer of E2-E1 heterodimers. Interacts with 6K protein. Interacts with host LDLRAD3; this interaction mediates viral entry to the host cell. In terms of assembly, oligomer. Interacts with spike glycoprotein E1. Interacts with spike glycoprotein E2. Post-translationally, structural polyprotein: Specific enzymatic cleavages in vivo yield mature proteins. Capsid protein is auto-cleaved during polyprotein translation, unmasking a signal peptide at the N-terminus of the precursor of E3/E2. The remaining polyprotein is then targeted to the host endoplasmic reticulum, where host signal peptidase cleaves it into pE2, 6K and E1 proteins. pE2 is further processed to mature E3 and E2 by host furin in trans-Golgi vesicle. In terms of processing, phosphorylated on serine and threonine residues. Palmitoylated via thioester bonds. These palmitoylations may induce disruption of the C-terminus transmembrane. This would result in the reorientation of E2 C-terminus from lumenal to cytoplasmic side. Post-translationally, N-glycosylated. In terms of processing, palmitoylated via thioester bonds.

Its subcellular location is the virion. It localises to the host cytoplasm. It is found in the host cell membrane. The protein localises to the host nucleus. The protein resides in the virion membrane. Its subcellular location is the host Golgi apparatus. It localises to the host trans-Golgi network. It is found in the host endoplasmic reticulum. It carries out the reaction Autocatalytic release of the core protein from the N-terminus of the togavirus structural polyprotein by hydrolysis of a -Trp-|-Ser- bond.. Functionally, forms an icosahedral capsid with a T=4 symmetry composed of 240 copies of the capsid protein surrounded by a lipid membrane through which penetrate 80 spikes composed of trimers of E1-E2 heterodimers. The capsid protein binds to the viral RNA genome at a site adjacent to a ribosome binding site for viral genome translation following genome release. Possesses a protease activity that results in its autocatalytic cleavage from the nascent structural protein. Following its self-cleavage, the capsid protein transiently associates with ribosomes, and within several minutes the protein binds to viral RNA and rapidly assembles into icosahedric core particles. The resulting nucleocapsid eventually associates with the cytoplasmic domain of the spike glycoprotein E2 at the cell membrane, leading to budding and formation of mature virions. In case of infection, new virions attach to target cells and after clathrin-mediated endocytosis their membrane fuses with the host endosomal membrane. This leads to the release of the nucleocapsid into the cytoplasm, followed by an uncoating event necessary for the genomic RNA to become accessible. The uncoating might be triggered by the interaction of capsid proteins with ribosomes. Binding of ribosomes would release the genomic RNA since the same region is genomic RNA-binding and ribosome-binding. Specifically inhibits interleukin-1 receptor-associated kinase 1/IRAK1-dependent signaling during viral entry, representing a means by which the alphaviruses may evade innate immune detection and activation prior to viral gene expression. Inhibits host transcription. Forms a tetrameric complex with XPO1/CRM1 and the nuclear import receptor importin. This complex blocks the central channel of host nuclear pores thereby inhibiting the receptor-mediated nuclear transport and thus the host mRNA and rRNA transcription. The inhibition of transcription is linked to a cytopathic effect on the host cell. Its function is as follows. Provides the signal sequence for the translocation of the precursor of protein E3/E2 to the host endoplasmic reticulum. Furin-cleaved E3 remains associated with spike glycoprotein E1 and mediates pH protection of the latter during the transport via the secretory pathway. After virion release from the host cell, the assembly protein E3 is gradually released in the extracellular space. Plays a role in viral attachment to target host cell, by binding to the cell receptor LDLRAD3. Synthesized as a p62 precursor which is processed by furin at the cell membrane just before virion budding, giving rise to E2-E1 heterodimer. The p62-E1 heterodimer is stable, whereas E2-E1 is unstable and dissociate at low pH. p62 is processed at the last step, presumably to avoid E1 fusion activation before its final export to cell surface. E2 C-terminus contains a transitory transmembrane that would be disrupted by palmitoylation, resulting in reorientation of the C-terminal tail from lumenal to cytoplasmic side. This step is critical since E2 C-terminus is involved in budding by interacting with capsid proteins. This release of E2 C-terminus in cytoplasm occurs lately in protein export, and precludes premature assembly of particles at the endoplasmic reticulum membrane. In terms of biological role, acts as a viroporin that participates in virus glycoprotein processing and transport to the plasma membrane, cell permeabilization and budding of viral particles. Disrupts the calcium homeostasis of the cell, probably at the endoplasmic reticulum level. This leads to cytoplasmic calcium elevation. Because of its lipophilic properties, the 6K protein is postulated to influence the selection of lipids that interact with the transmembrane domains of the glycoproteins, which, in turn, affects the deformability of the bilayer required for the extreme curvature that occurs as budding proceeds. Present in low amount in virions, about 3% compared to viral glycoproteins. Functionally, class II viral fusion protein. Fusion activity is inactive as long as E1 is bound to E2 in mature virion. After virus attachment to cell receptor LDLRAD3 and endocytosis, acidification of the endosome induce dissociation of E1/E2 heterodimer and concomitant trimerization of the E1 subunits. This E1 trimer is fusion active, and promotes release of viral nucleocapsid in cytoplasm after endosome and viral membrane fusion. Efficient fusion requires the presence of cholesterol and sphingolipid in the target membrane. This Venezuelan equine encephalitis virus (strain Mena II) (VEEV) protein is Structural polyprotein.